Reading from the N-terminus, the 185-residue chain is DNA-directed RNA polymerase 21 kDa subunit (185 aa).

It belongs to the poxviridae DNA-directed RNA polymerase 22 kDa subunit family. The DNA-dependent RNA polymerase used for intermediate and late genes expression consists of eight subunits Rpo30/OPG66, Rpo7/OPG90, Rpo22/OPG103, Rpo147/OPG105, Rpo18/OPG119, Rpo19/OPG131, Rpo132/OPG151 and Rpo35/OPG156. The same holoenzyme, with the addition of the transcription-specificity factor OPG109, is used for early gene expression.

It localises to the virion. It carries out the reaction RNA(n) + a ribonucleoside 5'-triphosphate = RNA(n+1) + diphosphate. Part of the DNA-dependent RNA polymerase which catalyzes the transcription of viral DNA into RNA using the four ribonucleoside triphosphates as substrates. Responsible for the transcription of early, intermediate and late genes. DNA-dependent RNA polymerase associates with the early transcription factor (ETF), itself composed of OPG118 and OPG133, thereby allowing the early genes transcription. Late transcription, and probably also intermediate transcription, require newly synthesized RNA polymerase. The sequence is that of DNA-directed RNA polymerase 21 kDa subunit (OPG103) from Oryctolagus cuniculus (Rabbit).